We begin with the raw amino-acid sequence, 351 residues long: GTP 3',8-cyclase (351 aa).

The region spanning 29 to 254 (RFGRVARDLR…EHGREDPSAP (226 aa)) is the Radical SAM core domain. R38 lines the GTP pocket. Residues C45 and C49 each coordinate [4Fe-4S] cluster. Y51 contributes to the S-adenosyl-L-methionine binding site. C52 serves as a coordination point for [4Fe-4S] cluster. R89 contacts GTP. G93 is a binding site for S-adenosyl-L-methionine. GTP is bound at residue T120. S144 serves as a coordination point for S-adenosyl-L-methionine. Position 181 (K181) interacts with GTP. M214 is a binding site for S-adenosyl-L-methionine. [4Fe-4S] cluster contacts are provided by C278 and C281. 283 to 285 (RTR) lines the GTP pocket. C295 serves as a coordination point for [4Fe-4S] cluster.

This sequence belongs to the radical SAM superfamily. MoaA family. In terms of assembly, monomer and homodimer. Requires [4Fe-4S] cluster as cofactor.

The enzyme catalyses GTP + AH2 + S-adenosyl-L-methionine = (8S)-3',8-cyclo-7,8-dihydroguanosine 5'-triphosphate + 5'-deoxyadenosine + L-methionine + A + H(+). It participates in cofactor biosynthesis; molybdopterin biosynthesis. In terms of biological role, catalyzes the cyclization of GTP to (8S)-3',8-cyclo-7,8-dihydroguanosine 5'-triphosphate. The chain is GTP 3',8-cyclase from Rhodococcus opacus (strain B4).